Here is a 175-residue protein sequence, read N- to C-terminus: MGRTLENKKSIVAELQETLSQSQLTLVIDYKGLTVAEITDLRKRLRPTGTLCKVTKNAFMRIAVDGNQTWQPLQSFCQETSAFLLVKDDLGGAIKAYQDFQKATKKTELRGGVMEGRSLNADQVKAIGDLPSKDQLMAQIAGAINGVATKLAVGINQVPTSLARGIKAVSEKEAA.

This sequence belongs to the universal ribosomal protein uL10 family. In terms of assembly, part of the ribosomal stalk of the 50S ribosomal subunit. The N-terminus interacts with L11 and the large rRNA to form the base of the stalk. The C-terminus forms an elongated spine to which L12 dimers bind in a sequential fashion forming a multimeric L10(L12)X complex.

In terms of biological role, forms part of the ribosomal stalk, playing a central role in the interaction of the ribosome with GTP-bound translation factors. The sequence is that of Large ribosomal subunit protein uL10 from Cyanothece sp. (strain PCC 7425 / ATCC 29141).